Reading from the N-terminus, the 245-residue chain is MRDGIKVRLVNYTKKPLETVTWAALISYWDEWETEAFERLGEKDVEMHLPRILGYGHESILEHAVLTFAIEGCSRVCSHQLVRHRIASYTQQSMRYIKINPRDVEETFVIPESVKKNPELYEKWKKLMRETIQLYEETYKAGVHQEDARFILPQAVRTKIVVTMNLRELKHFLGLRACERAQWEIRDVAWKMLGEIAKNEELRPIIRWAKLGPRCVQLGYCPEGELMPPGCWKRTREKWKEVALG.

In terms of domain architecture, ThyX spans 5 to 210 (IKVRLVNYTK…ELRPIIRWAK (206 aa)). FAD-binding positions include Ser59, 83–85 (RHR), and Gln91. DUMP-binding positions include 80-83 (QLVR), 91-95 (QQSMR), and Arg149. Residues 83-93 (RHRIASYTQQS) carry the ThyX motif motif. FAD is bound by residues 165-167 (NLR) and His171. Arg176 serves as a coordination point for dUMP. Arg176 (involved in ionization of N3 of dUMP, leading to its activation) is an active-site residue.

The protein belongs to the thymidylate synthase ThyX family. Homotetramer. It depends on FAD as a cofactor.

It catalyses the reaction dUMP + (6R)-5,10-methylene-5,6,7,8-tetrahydrofolate + NADPH + H(+) = dTMP + (6S)-5,6,7,8-tetrahydrofolate + NADP(+). Its pathway is pyrimidine metabolism; dTTP biosynthesis. Catalyzes the reductive methylation of 2'-deoxyuridine-5'-monophosphate (dUMP) to 2'-deoxythymidine-5'-monophosphate (dTMP) while utilizing 5,10-methylenetetrahydrofolate (mTHF) as the methyl donor, and NADPH and FADH(2) as the reductant. This Thermococcus onnurineus (strain NA1) protein is Flavin-dependent thymidylate synthase.